Consider the following 99-residue polypeptide: Aspartyl/glutamyl-tRNA(Asn/Gln) amidotransferase subunit C (99 aa).

The protein belongs to the GatC family. As to quaternary structure, heterotrimer of A, B and C subunits.

The catalysed reaction is L-glutamyl-tRNA(Gln) + L-glutamine + ATP + H2O = L-glutaminyl-tRNA(Gln) + L-glutamate + ADP + phosphate + H(+). The enzyme catalyses L-aspartyl-tRNA(Asn) + L-glutamine + ATP + H2O = L-asparaginyl-tRNA(Asn) + L-glutamate + ADP + phosphate + 2 H(+). In terms of biological role, allows the formation of correctly charged Asn-tRNA(Asn) or Gln-tRNA(Gln) through the transamidation of misacylated Asp-tRNA(Asn) or Glu-tRNA(Gln) in organisms which lack either or both of asparaginyl-tRNA or glutaminyl-tRNA synthetases. The reaction takes place in the presence of glutamine and ATP through an activated phospho-Asp-tRNA(Asn) or phospho-Glu-tRNA(Gln). The polypeptide is Aspartyl/glutamyl-tRNA(Asn/Gln) amidotransferase subunit C (Polaromonas naphthalenivorans (strain CJ2)).